Consider the following 144-residue polypeptide: L-fucose mutarotase (144 aa).

Residue His22 is the Proton donor of the active site. Substrate-binding positions include Asp30, Arg109, and 131–133 (YGN).

It belongs to the RbsD / FucU family. FucU mutarotase subfamily. Homodecamer.

It localises to the cytoplasm. It catalyses the reaction alpha-L-fucose = beta-L-fucose. It functions in the pathway carbohydrate metabolism; L-fucose metabolism. Involved in the anomeric conversion of L-fucose. This chain is L-fucose mutarotase, found in Histophilus somni (strain 2336) (Haemophilus somnus).